We begin with the raw amino-acid sequence, 303 residues long: Methionyl-tRNA formyltransferase (303 aa).

108–111 (SDLP) provides a ligand contact to (6S)-5,6,7,8-tetrahydrofolate.

This sequence belongs to the Fmt family.

The enzyme catalyses L-methionyl-tRNA(fMet) + (6R)-10-formyltetrahydrofolate = N-formyl-L-methionyl-tRNA(fMet) + (6S)-5,6,7,8-tetrahydrofolate + H(+). In terms of biological role, attaches a formyl group to the free amino group of methionyl-tRNA(fMet). The formyl group appears to play a dual role in the initiator identity of N-formylmethionyl-tRNA by promoting its recognition by IF2 and preventing the misappropriation of this tRNA by the elongation apparatus. This Rickettsia africae (strain ESF-5) protein is Methionyl-tRNA formyltransferase.